We begin with the raw amino-acid sequence, 427 residues long: Trigger factor (427 aa).

The PPIase FKBP-type domain maps to 163 to 248 (GDIAVIDFKG…IKSIKVKELP (86 aa)).

Belongs to the FKBP-type PPIase family. Tig subfamily.

The protein resides in the cytoplasm. It carries out the reaction [protein]-peptidylproline (omega=180) = [protein]-peptidylproline (omega=0). In terms of biological role, involved in protein export. Acts as a chaperone by maintaining the newly synthesized protein in an open conformation. Functions as a peptidyl-prolyl cis-trans isomerase. The protein is Trigger factor of Clostridium beijerinckii (strain ATCC 51743 / NCIMB 8052) (Clostridium acetobutylicum).